Reading from the N-terminus, the 609-residue chain is Tyrosyl-DNA phosphodiesterase 1 (609 aa).

Residues 1 to 12 (MSQESSYGKWTI) are compositionally biased toward polar residues. A disordered region spans residues 1–155 (MSQESSYGKW…YETSGEGQDI (155 aa)). A Phosphoserine modification is found at S61. Residues 105 to 118 (QPKRVLPQEKKHVS) show a composition bias toward basic and acidic residues. Residues S119 and S132 each carry the phosphoserine modification. T148 is modified (phosphothreonine). S149 bears the Phosphoserine mark. Residue H264 is the Nucleophile of the active site. K266 serves as a coordination point for substrate. The tract at residues 401–404 (SIGS) is interaction with DNA. Residue H494 is the Proton donor/acceptor of the active site. Substrate is bound at residue K496.

This sequence belongs to the tyrosyl-DNA phosphodiesterase family. As to quaternary structure, monomer. In terms of tissue distribution, ubiquitous.

The protein localises to the nucleus. It localises to the cytoplasm. In terms of biological role, DNA repair enzyme that can remove a variety of covalent adducts from DNA through hydrolysis of a 3'-phosphodiester bond, giving rise to DNA with a free 3' phosphate. Catalyzes the hydrolysis of dead-end complexes between DNA and the topoisomerase I active site tyrosine residue. Hydrolyzes 3'-phosphoglycolates on protruding 3' ends on DNA double-strand breaks due to DNA damage by radiation and free radicals. Acts on blunt-ended double-strand DNA breaks and on single-stranded DNA. Has low 3'exonuclease activity and can remove a single nucleoside from the 3'end of DNA and RNA molecules with 3'hydroxyl groups. Has no exonuclease activity towards DNA or RNA with a 3'phosphate. The protein is Tyrosyl-DNA phosphodiesterase 1 (Tdp1) of Mus musculus (Mouse).